The sequence spans 464 residues: Fumarate hydratase class II (464 aa).

Substrate contacts are provided by residues 96-98 (SGT), 127-130 (HPND), 137-139 (SSN), and T185. H186 (proton donor/acceptor) is an active-site residue. The active site involves S316. Residues S317 and 322 to 324 (KVN) each bind substrate.

Belongs to the class-II fumarase/aspartase family. Fumarase subfamily. Homotetramer.

The protein resides in the cytoplasm. The catalysed reaction is (S)-malate = fumarate + H2O. It participates in carbohydrate metabolism; tricarboxylic acid cycle; (S)-malate from fumarate: step 1/1. Involved in the TCA cycle. Catalyzes the stereospecific interconversion of fumarate to L-malate. The polypeptide is Fumarate hydratase class II (Pseudomonas putida (strain ATCC 47054 / DSM 6125 / CFBP 8728 / NCIMB 11950 / KT2440)).